The primary structure comprises 293 residues: Putative ribose uptake protein RbsU (293 aa).

10 helical membrane passes run 5-24, 34-51, 58-80, 95-114, 121-138, 153-170, 177-199, 212-234, 241-263, and 273-292; these read AILI…TIAS, IFGA…LALF, GGMA…IITF, TTAF…LGNW, IIGF…RMTV, SAVI…IYSA, IGGF…IYAL, VSWQ…LISA, LATG…IFFL, and MITI…TVFI.

It belongs to the GRP transporter (TC 2.A.7.5) family.

The protein resides in the cell membrane. Could be involved in the uptake of ribose. This chain is Putative ribose uptake protein RbsU (rbsU), found in Staphylococcus epidermidis (strain ATCC 35984 / DSM 28319 / BCRC 17069 / CCUG 31568 / BM 3577 / RP62A).